Here is a 221-residue protein sequence, read N- to C-terminus: Large ribosomal subunit protein uL3 (221 aa).

This sequence belongs to the universal ribosomal protein uL3 family. In terms of assembly, part of the 50S ribosomal subunit. Forms a cluster with proteins L14 and L19.

In terms of biological role, one of the primary rRNA binding proteins, it binds directly near the 3'-end of the 23S rRNA, where it nucleates assembly of the 50S subunit. In Chlamydia abortus (strain DSM 27085 / S26/3) (Chlamydophila abortus), this protein is Large ribosomal subunit protein uL3.